Consider the following 170-residue polypeptide: Lipoprotein signal peptidase (170 aa).

A run of 3 helical transmembrane segments spans residues 9-29, 72-92, and 96-118; these read FNIF…KYLV, IFFL…SLKE, and IARI…RLFR. Catalysis depends on residues Asp-124 and Asp-146. The helical transmembrane segment at 143–163 threads the bilayer; it reads NFADSYVVIGMILFLVYDFFI.

The protein belongs to the peptidase A8 family.

The protein resides in the cell inner membrane. It catalyses the reaction Release of signal peptides from bacterial membrane prolipoproteins. Hydrolyzes -Xaa-Yaa-Zaa-|-(S,diacylglyceryl)Cys-, in which Xaa is hydrophobic (preferably Leu), and Yaa (Ala or Ser) and Zaa (Gly or Ala) have small, neutral side chains.. It functions in the pathway protein modification; lipoprotein biosynthesis (signal peptide cleavage). This protein specifically catalyzes the removal of signal peptides from prolipoproteins. The polypeptide is Lipoprotein signal peptidase (Borreliella afzelii (strain PKo) (Borrelia afzelii)).